Reading from the N-terminus, the 140-residue chain is Perlin matrix protein (140 aa).

Residues 1-26 form the signal peptide; that stretch reads MTCTLRLTVAALVLLGICHLSRPVAA.

Belongs to the N16 matrix protein family. As to quaternary structure, heterooligomer; disulfide-linked. Pif97, Pif80, N16 and other proteins form a complex. In terms of tissue distribution, component of conchiolin, the organic matrix of nacre. Only expressed in the dorsal region of the mantle.

The protein resides in the secreted. Its subcellular location is the extracellular space. It is found in the extracellular matrix. In terms of biological role, may be specifically involved in the formation of the nacreous layer. This is Perlin matrix protein from Margaritifera margaritifera (Freshwater pearl mussel).